The chain runs to 251 residues: Imidazole glycerol phosphate synthase subunit HisF (251 aa).

Active-site residues include Asp-11 and Asp-130.

The protein belongs to the HisA/HisF family. As to quaternary structure, heterodimer of HisH and HisF.

The protein resides in the cytoplasm. It carries out the reaction 5-[(5-phospho-1-deoxy-D-ribulos-1-ylimino)methylamino]-1-(5-phospho-beta-D-ribosyl)imidazole-4-carboxamide + L-glutamine = D-erythro-1-(imidazol-4-yl)glycerol 3-phosphate + 5-amino-1-(5-phospho-beta-D-ribosyl)imidazole-4-carboxamide + L-glutamate + H(+). It participates in amino-acid biosynthesis; L-histidine biosynthesis; L-histidine from 5-phospho-alpha-D-ribose 1-diphosphate: step 5/9. In terms of biological role, IGPS catalyzes the conversion of PRFAR and glutamine to IGP, AICAR and glutamate. The HisF subunit catalyzes the cyclization activity that produces IGP and AICAR from PRFAR using the ammonia provided by the HisH subunit. This is Imidazole glycerol phosphate synthase subunit HisF from Metallosphaera sedula (strain ATCC 51363 / DSM 5348 / JCM 9185 / NBRC 15509 / TH2).